We begin with the raw amino-acid sequence, 556 residues long: Formate--tetrahydrofolate ligase (556 aa).

65–72 (TPAGEGKT) serves as a coordination point for ATP.

The protein belongs to the formate--tetrahydrofolate ligase family.

The catalysed reaction is (6S)-5,6,7,8-tetrahydrofolate + formate + ATP = (6R)-10-formyltetrahydrofolate + ADP + phosphate. It participates in one-carbon metabolism; tetrahydrofolate interconversion. The chain is Formate--tetrahydrofolate ligase from Agathobacter rectalis (strain ATCC 33656 / DSM 3377 / JCM 17463 / KCTC 5835 / VPI 0990) (Eubacterium rectale).